A 368-amino-acid chain; its full sequence is MSILEKVQPIETMLPERYYTMSTEDMEKRVREIKEKMGETLFIPGHHYQKDEVVQFSDAAGDSLQLAQVAASNKDAKYIVFCGVHFMAETADMLTTDDQIVILPDMRAGCSMADMADIEQTERAWKELTKLFGDTMIPLTYVNSTAAIKAFCGRNGGATVTSSNAKQMVSWAFTQKERLVFLPDQHLGRNTAYDLGIPLDKMAVWDPHTDSLEYDGDIEEIQVILWKGHCSVHQNFTVKNIENVRKNHPDMNIIVHPECCYEVVAASDYAGSTKYIIDMIESAPSGSKWAIGTEMNLVNRIIQQHPDKEIVSLNPFMCPCLTMNRIDLPHLLWALETIERGEEINVISVDKQVTEEAVLALNRMLERV.

Residues His-46 and Ser-63 each coordinate iminosuccinate. Cys-110 contributes to the [4Fe-4S] cluster binding site. Residues 141 to 143 (YVN) and Ser-162 contribute to the iminosuccinate site. Cys-230 is a [4Fe-4S] cluster binding site. Residues 256-258 (HPE) and Thr-273 each bind iminosuccinate. Cys-320 is a [4Fe-4S] cluster binding site.

Belongs to the quinolinate synthase family. Type 3 subfamily. [4Fe-4S] cluster serves as cofactor.

It localises to the cytoplasm. It carries out the reaction iminosuccinate + dihydroxyacetone phosphate = quinolinate + phosphate + 2 H2O + H(+). It functions in the pathway cofactor biosynthesis; NAD(+) biosynthesis; quinolinate from iminoaspartate: step 1/1. Catalyzes the condensation of iminoaspartate with dihydroxyacetone phosphate to form quinolinate. This is Quinolinate synthase from Bacillus cereus (strain ZK / E33L).